A 415-amino-acid chain; its full sequence is Sucrose permease (415 aa).

Residues 1–16 lie on the Cytoplasmic side of the membrane; that stretch reads MALNIPFRNAYYRFAS. A helical transmembrane segment spans residues 17–37; it reads SYSFLFFISWSLWWSLYAIWL. Over 38 to 48 the chain is Periplasmic; that stretch reads KGHLGLTGTEL. A helical membrane pass occupies residues 49–69; that stretch reads GTLYSVNQFTSILFMMFYGIV. Residues 70 to 77 lie on the Cytoplasmic side of the membrane; the sequence is QDKLGLKK. The chain crosses the membrane as a helical span at residues 78–98; that stretch reads PLIWCMSFILVLTGPFMIYVY. The Periplasmic portion of the chain corresponds to 99-107; it reads EPLLQSNFS. The helical transmembrane segment at 108–128 threads the bilayer; that stretch reads VGLILGALFFGLGYLAGCGLL. At 129 to 147 the chain is on the cytoplasmic side; the sequence is DSFTEKMARNFHFEYGTAR. Residues 148–167 form a helical membrane-spanning segment; sequence AWGSFGYAIGAFFAGIFFSI. The Periplasmic portion of the chain corresponds to 168-170; sequence SPH. A helical transmembrane segment spans residues 171–190; it reads INFWLVSLFGAVFMMINMRF. Topologically, residues 191 to 220 are cytoplasmic; sequence KDKDHQCIAADAGGVKKEDFIAVFKDRNFW. A helical transmembrane segment spans residues 221–241; it reads VFVIFIVGTWSFYNIFDQQLF. Topologically, residues 242-260 are periplasmic; sequence PVFYAGLFESHDVGTRLYG. Residues 261–281 traverse the membrane as a helical segment; sequence YLNSFQVVLEALCMAIIPFFV. The Cytoplasmic segment spans residues 282–287; sequence NRVGPK. Residues 288-308 form a helical membrane-spanning segment; it reads NALLIGVVIMALRILSCALFV. At 309–311 the chain is on the periplasmic side; that stretch reads NPW. Residues 312–332 form a helical membrane-spanning segment; that stretch reads IISLVKLLHAIEVPLCVISVF. The Cytoplasmic segment spans residues 333-342; the sequence is KYSVANFDKR. A helical membrane pass occupies residues 343–363; that stretch reads LSSTIFLIGFQIASSLGIVLL. Residues 364 to 377 are Periplasmic-facing; that stretch reads STPTGILFDHAGYQ. Residues 378–398 traverse the membrane as a helical segment; sequence TVFFAISGIVCLMLLFGIFFL. Residues 399-415 lie on the Cytoplasmic side of the membrane; the sequence is SKKREQIVMETPVPSAI.

It belongs to the major facilitator superfamily. Oligosaccharide:H(+) symporter (OHS) (TC 2.A.1.5) family.

It localises to the cell inner membrane. The protein operates within glycan biosynthesis; sucrose metabolism. Functionally, responsible for transport of sucrose into the cell, with the concomitant import of a proton (symport system). Can also transport maltose, fructose or lactulose, but not glucose, lactose or melibiose. The substrate specificity is directed toward the fructofuranosyl moiety of the substrate. This chain is Sucrose permease, found in Escherichia coli.